Consider the following 252-residue polypeptide: MLTKRIIPCLDVDHGRVKKGINFVQLKDVGDPVAIAKAYQEQGADELVFLDITATNEARGTLVQTVEAVANQVFMPLTVGGGIQSVADMHALLRAGADKVSLNSAAVADPSLLTAGAEKFGRQAIVAAIDTRWQADQNRYQVTVNGGRTSVDLDAITWAKQAVAAGAGELLVTSMDADGTESGFDLRLHQQLTAAVQVPIIASGGAGSTTDFVQLFTQTTVSAGLAASIFHFGELTVPQVKTALKQAKVAVR.

Active-site residues include D11 and D130.

The protein belongs to the HisA/HisF family. Heterodimer of HisH and HisF.

Its subcellular location is the cytoplasm. It catalyses the reaction 5-[(5-phospho-1-deoxy-D-ribulos-1-ylimino)methylamino]-1-(5-phospho-beta-D-ribosyl)imidazole-4-carboxamide + L-glutamine = D-erythro-1-(imidazol-4-yl)glycerol 3-phosphate + 5-amino-1-(5-phospho-beta-D-ribosyl)imidazole-4-carboxamide + L-glutamate + H(+). It functions in the pathway amino-acid biosynthesis; L-histidine biosynthesis; L-histidine from 5-phospho-alpha-D-ribose 1-diphosphate: step 5/9. IGPS catalyzes the conversion of PRFAR and glutamine to IGP, AICAR and glutamate. The HisF subunit catalyzes the cyclization activity that produces IGP and AICAR from PRFAR using the ammonia provided by the HisH subunit. In Lacticaseibacillus casei (strain BL23) (Lactobacillus casei), this protein is Imidazole glycerol phosphate synthase subunit HisF.